Reading from the N-terminus, the 212-residue chain is MSARIVVTGTDTGIGKTVFAAALAGALDATYWKPVQSGLEDETDSGAVQRLSGLAADRILPERYRLQTPASPHLAAEIDGVDIDVAALELPSVSRPLVVEGAGGLMVPLTRETTYIDVFARWAAPLVLCARTSLGTINHTLLSIEAIRARDIPLLGVAFLGDENLDSEQIIVELGHTRRLGRLPRLERLDAAALRAGFAAAFEPRDFLGDAP.

13–18 (GIGKTV) provides a ligand contact to ATP. Thr17 lines the Mg(2+) pocket. The active site involves Lys33. Substrate is bound at residue Ser37. Glu100 contributes to the Mg(2+) binding site. ATP is bound by residues 100-103 (EGAG) and 184-186 (PRL).

This sequence belongs to the dethiobiotin synthetase family. As to quaternary structure, homodimer. It depends on Mg(2+) as a cofactor.

It is found in the cytoplasm. The enzyme catalyses (7R,8S)-7,8-diammoniononanoate + CO2 + ATP = (4R,5S)-dethiobiotin + ADP + phosphate + 3 H(+). Its pathway is cofactor biosynthesis; biotin biosynthesis; biotin from 7,8-diaminononanoate: step 1/2. Its function is as follows. Catalyzes a mechanistically unusual reaction, the ATP-dependent insertion of CO2 between the N7 and N8 nitrogen atoms of 7,8-diaminopelargonic acid (DAPA, also called 7,8-diammoniononanoate) to form a ureido ring. This is ATP-dependent dethiobiotin synthetase BioD from Rhodopseudomonas palustris (strain ATCC BAA-98 / CGA009).